A 213-amino-acid polypeptide reads, in one-letter code: Ribosomal RNA small subunit methyltransferase G (213 aa).

S-adenosyl-L-methionine-binding positions include glycine 75, phenylalanine 80, 128–129 (IE), and arginine 144.

The protein belongs to the methyltransferase superfamily. RNA methyltransferase RsmG family.

It localises to the cytoplasm. It carries out the reaction guanosine(527) in 16S rRNA + S-adenosyl-L-methionine = N(7)-methylguanosine(527) in 16S rRNA + S-adenosyl-L-homocysteine. Its function is as follows. Specifically methylates the N7 position of guanine in position 527 of 16S rRNA. This chain is Ribosomal RNA small subunit methyltransferase G, found in Brucella abortus (strain S19).